The following is a 102-amino-acid chain: Carboxysome shell protein CcmK2 (102 aa).

Residues Ala4–Pro90 enclose the BMC domain.

Belongs to the bacterial microcompartments protein family. CcmK subfamily. As to quaternary structure, homohexamer. Interacts with CcmO in the carboxysome. Interacts with CcmN.

The protein localises to the carboxysome. Functionally, one of the shell proteins of the carboxysome, a polyhedral inclusion where RuBisCO (ribulose bisphosphate carboxylase, rbcL-rbcS) is sequestered. Assembles into hexamers which make sheets that form the facets of the polyhedral carboxysome. The hexamer central pore probably regulates metabolite flux. Its function is as follows. The major shell protein of the carboxysome, a polyhedral inclusion where RuBisCO (ribulose bisphosphate carboxylase, rbcL-rbcS) is sequestered. Hexamers make sheets that form the facets of the polyhedral carboxysome. The shell is 4.5 nm thick, as observed for CcmK hexamers. Required for recruitment of CcmO to the pre-carboxysome. In PCC 7942 there are several CcmK paralogs with presumably functional differences; replacing the central pore residues (34-37) with those of either CcmK4 from this organism (Tyr-Met-Arg-Ala) or from an alpha-type carboxysome forming cyanobacterium (CsoS1 of P.marinus strain MIT 9313, Arg-Glu-Phe-Val) allows the bacterium to make carboxysomes, but the expression level is too low to know if the carboxysome is functional for CO(2) fixation. Beta-carboxysome assembly initiates when soluble RuBisCO is condensed into a liquid matrix in a pre-carboxysome by the RbcS-like domains of probably both CcmM58 and CcmM35. CcmN interacts with the N-terminus of CcmM58, and then recruits the CcmK2 major shell protein via CcmN's encapsulation peptide. Shell formation requires CcmK proteins and CcmO. CcmL caps the otherwise elongated carboxysome. Once fully encapsulated carboxysomes are formed, they migrate within the cell probably via interactions with the cytoskeleton. In Synechococcus elongatus (strain ATCC 33912 / PCC 7942 / FACHB-805) (Anacystis nidulans R2), this protein is Carboxysome shell protein CcmK2.